The primary structure comprises 2149 residues: Oxygen-regulated protein 1 (2149 aa).

A compositionally biased stretch (polar residues) spans 1–20; it reads MSDTPSTGFSMIHPTSSEGQ. The segment at 1 to 25 is disordered; it reads MSDTPSTGFSMIHPTSSEGQVPSPR. Positions 36–118 constitute a Doublecortin 1 domain; the sequence is KRISFYKSGD…GRKVQPVDLD (83 aa). A disordered region spans residues 127–148; it reads WLSSRAVSTHAPPHSVAAPGMP. Residues 152–231 form the Doublecortin 2 domain; the sequence is RSLVVFRNGD…REPFKPGNYD (80 aa). Disordered regions lie at residues 351–373, 1435–1456, and 1583–1613; these read VSKTGPSNNDEKSEMSFPGRTES, MEEPRTSEEPGSVTNSVTSSER, and VTSDWSDYRPDSDSEQAYKTSSDDPNDSGEL. Over residues 1446 to 1456 the composition is skewed to polar residues; the sequence is SVTNSVTSSER.

In terms of assembly, interacts (via the doublecortin domains) with microtubules. Interacts with RP1L1. Interacts with MAK.

The protein resides in the cytoplasm. The protein localises to the cytoskeleton. Its subcellular location is the cilium axoneme. It is found in the cell projection. It localises to the cilium. The protein resides in the photoreceptor outer segment. Its function is as follows. Microtubule-associated protein regulating the stability and length of the microtubule-based axoneme of photoreceptors. Required for the differentiation of photoreceptor cells, it plays a role in the organization of the outer segment of rod and cone photoreceptors ensuring the correct orientation and higher-order stacking of outer segment disks along the photoreceptor axoneme. The protein is Oxygen-regulated protein 1 (RP1) of Saimiri boliviensis boliviensis (Bolivian squirrel monkey).